A 296-amino-acid chain; its full sequence is Putative ankyrin repeat protein FPV216 (296 aa).

ANK repeat units lie at residues 73 to 102 (SYVN…DVNT) and 107 to 136 (LVIT…NINI).

The chain is Putative ankyrin repeat protein FPV216 from Fowlpox virus (strain NVSL) (FPV).